Here is an 835-residue protein sequence, read N- to C-terminus: BCL11 transcription factor A (835 aa).

Residues 1-12 show a composition bias toward basic residues; the sequence is MSRRKQGKPQHL. The disordered stretch occupies residues 1 to 41; that stretch reads MSRRKQGKPQHLSKREFSPEPLEAILTDDEPDHGPLGAPEG. A required for nuclear body formation and for SUMO1 recruitment region spans residues 1–210; sequence MSRRKQGKPQ…SEHGSPLTPR (210 aa). Residues 45–71 form a C2HC-type zinc finger; sequence LLTCGQCQMNFPLGDILIFIEHKRKQC. Residues C48, C51, H66, and C71 each coordinate Zn(2+). S86 carries the phosphoserine modification. Residues K123 and K164 each participate in a glycyl lysine isopeptide (Lys-Gly) (interchain with G-Cter in SUMO2) cross-link. Residues 170–193 form a C2H2-type 1 zinc finger; the sequence is YTCTTCKQPFTSAWFLLQHAQNTH. S205 bears the Phosphoserine mark. R271 is modified (asymmetric dimethylarginine). The disordered stretch occupies residues 323–376; sequence AGNTSSPPLSPGRPSPMQRLLQPFQPGSKPPFLATPPLPPLQSAPPPSQPPVKS. S332 and S337 each carry phosphoserine. A compositionally biased stretch (pro residues) spans 355–372; sequence LATPPLPPLQSAPPPSQP. 2 consecutive C2H2-type zinc fingers follow at residues 377-399 and 405-429; these read KSCE…RRSH and YKCN…THMH. Residues 421-430 are compositionally biased toward basic residues; the sequence is KRHMKTHMHK. Disordered regions lie at residues 421-458, 471-512, and 572-619; these read KRHM…LVGS, KSEN…ERVD, and RGHL…GLSK. Residues 441–450 show a composition bias toward polar residues; that stretch reads GLSTASSPEP. 2 positions are modified to phosphoserine: S446 and S447. Residues 482–506 are compositionally biased toward acidic residues; that stretch reads NGDEEEEEDDEEEEEEEEEEEEELT. The segment covering 574 to 584 has biased composition (basic and acidic residues); that stretch reads HLAEAEGHRDT. S608 bears the Phosphoserine mark. K620 participates in a covalent cross-link: Glycyl lysine isopeptide (Lys-Gly) (interchain with G-Cter in SUMO2). Phosphoserine is present on residues S625 and S630. K634 is covalently cross-linked (Glycyl lysine isopeptide (Lys-Gly) (interchain with G-Cter in SUMO1)). Positions 678–740 are disordered; that stretch reads DSRQSPFASS…GRPSSKEGRR (63 aa). Low complexity predominate over residues 682–696; it reads SPFASSSEHSSENGS. The residue at position 701 (T701) is a Phosphothreonine. A compositionally biased stretch (gly residues) spans 706 to 720; sequence LDGGISGRSGTGSGG. Positions 737 to 835 are DNA-binding; it reads EGRRSDTCEY…RVLNNDIKTE (99 aa). The C2H2-type 4 zinc-finger motif lies at 742–764; it reads DTCEYCGKVFKNCSNLTVHRRSH. Positions 744, 747, 760, and 764 each coordinate Zn(2+). The segment at 765 to 769 is disordered; it reads TGERP. Residues 770-792 form a C2H2-type 5 zinc finger; that stretch reads YKCELCNYACAQSSKLTRHMKTH. C772, C775, H788, and H792 together coordinate Zn(2+). Positions 793-799 are disordered; that stretch reads GQVGKDV. A C2H2-type 6 zinc finger spans residues 800 to 823; sequence YKCEICKMPFSVYSTLEKHMKKWH. C802, C805, H818, and H823 together coordinate Zn(2+). Residue K833 forms a Glycyl lysine isopeptide (Lys-Gly) (interchain with G-Cter in SUMO2) linkage.

In terms of assembly, homotetrameric; self-associates via C2HC-type zinc finger domain. Interacts with MTA2, a component of the nucleosome remodeling and deacetylase (NuRD) repressor complex. Interacts (via its C2H2-type zinc finger domains 4, 5 and 6) with promoter region of gamma-globulin. Interacts with NR2F1, PIAS3, NR2F2 and NR2F6. Isoform 1, isoform 2 and isoform 3 form homodimers and heterodimers. Isoform 2 interacts with TBR1. Sumoylated with SUMO1. As to expression, expressed at high levels in brain, spleen thymus, bone marrow and testis. Expressed in CD34-positive myeloid precursor cells, B-cells, monocytes and megakaryocytes. Expression is tightly regulated during B-cell development. In terms of tissue distribution, expressed in fetal and adult brain, and in the plasmacytoid dendritic cell.

It is found in the cytoplasm. Its subcellular location is the nucleus. The protein resides in the chromosome. It localises to the nucleus matrix. In terms of biological role, transcription factor. Associated with the BAF SWI/SNF chromatin remodeling complex. Binds to the 5'-TGACCA-3' sequence motif in regulatory regions of target genes, including a distal promoter of the HBG1 hemoglobin subunit gamma-1 gene. Involved in regulation of the developmental switch from gamma- to beta-globin, probably via direct repression of HBG1; hence indirectly repressing fetal hemoglobin (HbF) level. Involved in brain development. May play a role in hematopoiesis. Essential factor in lymphopoiesis required for B-cell formation in fetal liver. May function as a modulator of the transcriptional repression activity of NR2F2. This is BCL11 transcription factor A (BCL11A) from Homo sapiens (Human).